A 636-amino-acid chain; its full sequence is Chaperone protein HtpG (636 aa).

The a; substrate-binding stretch occupies residues 1–329 (MSKEHGAAAE…TEDLPLNISR (329 aa)). The interval 330–550 (ETLQENALIA…DGGMTASMEK (221 aa)) is b. Positions 551-636 (LMRVMNKDES…TGWYAEVRKL (86 aa)) are c.

This sequence belongs to the heat shock protein 90 family. As to quaternary structure, homodimer.

It localises to the cytoplasm. Functionally, molecular chaperone. Has ATPase activity. This Oleidesulfovibrio alaskensis (strain ATCC BAA-1058 / DSM 17464 / G20) (Desulfovibrio alaskensis) protein is Chaperone protein HtpG.